The chain runs to 175 residues: Heme-dependent oxidative N-demethylase delta subunit (175 aa).

In terms of assembly, the heme-dependent oxidative N-demethylase (HODM) is a heterotetramer composed of a catalytic alpha subunit, a FMN/2Fe-2S-dependent oxidoreductase beta subunit, a gamma subunit with putative aminotransferase activity, and a delta subunit of unknown function.

Functionally, component of the heme-dependent oxidative N-demethylase (HODM) enzyme, that catalyzes the NADPH-dependent oxidation of dimethylamine (DMA) to methylamine (MA) and formaldehyde. Functions in bacterial methylated amine catabolism, linking alkylamine oxidation to the tetrahydrofolate C1 pool. The function of the delta subunit is unknown. The sequence is that of Heme-dependent oxidative N-demethylase delta subunit from Ectopseudomonas mendocina (strain ymp) (Pseudomonas mendocina).